A 66-amino-acid chain; its full sequence is Large ribosomal subunit protein bL31 (66 aa).

Residues Cys-16, Cys-18, Cys-36, and Cys-39 each coordinate Zn(2+).

Belongs to the bacterial ribosomal protein bL31 family. Type A subfamily. As to quaternary structure, part of the 50S ribosomal subunit. Zn(2+) serves as cofactor.

Its function is as follows. Binds the 23S rRNA. The polypeptide is Large ribosomal subunit protein bL31 (Campylobacter lari (strain RM2100 / D67 / ATCC BAA-1060)).